A 72-amino-acid chain; its full sequence is Translation initiation factor IF-1 (72 aa).

One can recognise an S1-like domain in the interval 1-72; sequence MAKEEAITVD…SKGRITYRKK (72 aa).

It belongs to the IF-1 family. Component of the 30S ribosomal translation pre-initiation complex which assembles on the 30S ribosome in the order IF-2 and IF-3, IF-1 and N-formylmethionyl-tRNA(fMet); mRNA recruitment can occur at any time during PIC assembly.

The protein resides in the cytoplasm. Functionally, one of the essential components for the initiation of protein synthesis. Stabilizes the binding of IF-2 and IF-3 on the 30S subunit to which N-formylmethionyl-tRNA(fMet) subsequently binds. Helps modulate mRNA selection, yielding the 30S pre-initiation complex (PIC). Upon addition of the 50S ribosomal subunit IF-1, IF-2 and IF-3 are released leaving the mature 70S translation initiation complex. This is Translation initiation factor IF-1 from Leptospira borgpetersenii serovar Hardjo-bovis (strain L550).